Consider the following 164-residue polypeptide: Small ribosomal subunit protein uS5 (164 aa).

The S5 DRBM domain maps to 9–72 (YQEKLLKISR…AAAKKNIVKI (64 aa)).

It belongs to the universal ribosomal protein uS5 family. In terms of assembly, part of the 30S ribosomal subunit. Contacts proteins S4 and S8.

With S4 and S12 plays an important role in translational accuracy. Functionally, located at the back of the 30S subunit body where it stabilizes the conformation of the head with respect to the body. The sequence is that of Small ribosomal subunit protein uS5 from Fusobacterium nucleatum subsp. nucleatum (strain ATCC 25586 / DSM 15643 / BCRC 10681 / CIP 101130 / JCM 8532 / KCTC 2640 / LMG 13131 / VPI 4355).